Here is a 163-residue protein sequence, read N- to C-terminus: HTH-type transcriptional regulator IscR (163 aa).

The region spanning 2–131 is the HTH rrf2-type domain; the sequence is RLTSKGRYAV…NNITLGELVN (130 aa). The segment at residues 28 to 51 is a DNA-binding region (H-T-H motif); it reads LADISERQGISLSYLEQLFSRLRK. Positions 92, 98, and 104 each coordinate [2Fe-2S] cluster. A compositionally biased stretch (basic and acidic residues) spans 140–149; sequence DRQHTHDAPR. The tract at residues 140 to 163 is disordered; it reads DRQHTHDAPRSTRTQDAIDVKLRA.

Requires [2Fe-2S] cluster as cofactor.

Its function is as follows. Regulates the transcription of several operons and genes involved in the biogenesis of Fe-S clusters and Fe-S-containing proteins. The sequence is that of HTH-type transcriptional regulator IscR from Citrobacter koseri (strain ATCC BAA-895 / CDC 4225-83 / SGSC4696).